Reading from the N-terminus, the 336-residue chain is Dihydroorotate dehydrogenase (quinone) (336 aa).

FMN-binding positions include 62–66 (AGLDK) and Thr86. Lys66 serves as a coordination point for substrate. Substrate is bound at residue 111–115 (NRMGF). The FMN site is built by Asn139 and Asn172. Asn172 provides a ligand contact to substrate. Catalysis depends on Ser175, which acts as the Nucleophile. Residue Asn177 coordinates substrate. Positions 217 and 245 each coordinate FMN. 246–247 (NT) provides a ligand contact to substrate. Residues Gly268, Gly297, and 318–319 (YS) contribute to the FMN site.

This sequence belongs to the dihydroorotate dehydrogenase family. Type 2 subfamily. In terms of assembly, monomer. It depends on FMN as a cofactor.

It is found in the cell membrane. It catalyses the reaction (S)-dihydroorotate + a quinone = orotate + a quinol. Its pathway is pyrimidine metabolism; UMP biosynthesis via de novo pathway; orotate from (S)-dihydroorotate (quinone route): step 1/1. Functionally, catalyzes the conversion of dihydroorotate to orotate with quinone as electron acceptor. This is Dihydroorotate dehydrogenase (quinone) from Shigella flexneri serotype 5b (strain 8401).